Consider the following 161-residue polypeptide: Nucleotide-binding protein Mmc1_1670 (161 aa).

Belongs to the YajQ family.

In terms of biological role, nucleotide-binding protein. The chain is Nucleotide-binding protein Mmc1_1670 from Magnetococcus marinus (strain ATCC BAA-1437 / JCM 17883 / MC-1).